Consider the following 340-residue polypeptide: Cytosolic Fe-S cluster assembly factor NBP35 (340 aa).

The [4Fe-4S] cluster site is built by Cys-31, Cys-45, Cys-48, and Cys-54. 84–91 is a binding site for ATP; it reads GKGGVGKS. 2 residues coordinate [4Fe-4S] cluster: Cys-257 and Cys-260.

It belongs to the Mrp/NBP35 ATP-binding proteins family. NUBP1/NBP35 subfamily. In terms of assembly, heterotetramer of 2 NBP35 and 2 CFD1 chains. Requires [4Fe-4S] cluster as cofactor.

The protein resides in the cytoplasm. Its function is as follows. Component of the cytosolic iron-sulfur (Fe/S) protein assembly (CIA) machinery. Required for maturation of extramitochondrial Fe-S proteins. The NBP35-CFD1 heterotetramer forms a Fe-S scaffold complex, mediating the de novo assembly of an Fe-S cluster and its transfer to target apoproteins. The protein is Cytosolic Fe-S cluster assembly factor NBP35 of Phaeosphaeria nodorum (strain SN15 / ATCC MYA-4574 / FGSC 10173) (Glume blotch fungus).